Consider the following 88-residue polypeptide: Small ribosomal subunit protein uS17 (88 aa).

It belongs to the universal ribosomal protein uS17 family. As to quaternary structure, part of the 30S ribosomal subunit.

Functionally, one of the primary rRNA binding proteins, it binds specifically to the 5'-end of 16S ribosomal RNA. This is Small ribosomal subunit protein uS17 from Maridesulfovibrio salexigens (strain ATCC 14822 / DSM 2638 / NCIMB 8403 / VKM B-1763) (Desulfovibrio salexigens).